Here is a 734-residue protein sequence, read N- to C-terminus: Predicted GPI-anchored protein 49 (734 aa).

An N-terminal signal peptide occupies residues 1 to 16 (MNYITSLLLLSSNTFL). Residues asparagine 27, asparagine 56, asparagine 68, and asparagine 71 are each glycosylated (N-linked (GlcNAc...) asparagine). The disordered stretch occupies residues 78 to 145 (DNSDTDIDDS…NESDTQNEND (68 aa)). Over residues 87–98 (SSSNSEDVSSND) the composition is skewed to low complexity. Asparagine 105, asparagine 118, asparagine 136, and asparagine 180 each carry an N-linked (GlcNAc...) asparagine glycan. Residues 110–129 (FSDESDEGNDSDDNGDEVEN) show a composition bias toward acidic residues. The span at 130–141 (MENNQANESDTQ) shows a compositional bias: polar residues. 2 disordered regions span residues 216 to 262 (SPKS…LKSK) and 331 to 360 (DANPTEEYDSGDGKENTQQNPIPEKMRLPT). Residues 228 to 259 (SRKKTLKSKSKSKSSKLKHKSRKSHKRRPKLL) are compositionally biased toward basic residues. N-linked (GlcNAc...) asparagine glycans are attached at residues asparagine 388 and asparagine 427. Residues 447–479 (PPRYSNHHSEFTVERPPRPSRTKKRPRIKAKKT) form a disordered region. Basic and acidic residues predominate over residues 453-463 (HHSEFTVERPP). Residues 464 to 479 (RPSRTKKRPRIKAKKT) show a composition bias toward basic residues. Asparagine 517 carries N-linked (GlcNAc...) asparagine glycosylation. The segment at 582 to 653 (KPQETKLHSP…STTSTKPNDQ (72 aa)) is disordered. Low complexity predominate over residues 592–611 (TSTDTKSSKLMSSSSSNNNK). Polar residues predominate over residues 620 to 631 (EYNQTQESTSYN). N-linked (GlcNAc...) asparagine glycans are attached at residues asparagine 622 and asparagine 631. Residues 632 to 650 (TTKAVPKTSVVSSTTSTKP) are compositionally biased toward low complexity. Serine 707 is lipidated: GPI-anchor amidated serine. Positions 708 to 734 (ASQNLSFSVLGLIILLLLLPGLLIIIM) are cleaved as a propeptide — removed in mature form. Asparagine 711 is a glycosylation site (N-linked (GlcNAc...) asparagine).

The protein localises to the cell membrane. The polypeptide is Predicted GPI-anchored protein 49 (PGA49) (Candida albicans (strain SC5314 / ATCC MYA-2876) (Yeast)).